Here is a 37-residue protein sequence, read N- to C-terminus: Mu-thomitoxin-Hme1a (37 aa).

Intrachain disulfides connect C2/C18, C9/C22, and C17/C33. At F37 the chain carries Phenylalanine amide.

This sequence belongs to the neurotoxin 01 (U2-agtx) family. In terms of processing, contains 3 disulfide bonds. As to expression, expressed by the venom gland.

The protein localises to the secreted. Functionally, blocks the Nav1.2/SCN2A, Nav1.4/SCN4A, and Nav1.6/SCN8A sodium channels. Reduces the peak amplitude of the sodium current and negatively shifts the steady-state inactivation process. Does not shift the threshold potential of activation or the voltage corresponding to maximal current. Does not change the reversal potential of the sodium current. May act on site 1 of the receptor. In Heriaeus mellotteei (Crab spider), this protein is Mu-thomitoxin-Hme1a.